A 389-amino-acid polypeptide reads, in one-letter code: Glutamate 5-kinase (389 aa).

Lys-16 is an ATP binding site. 3 residues coordinate substrate: Ser-56, Asp-143, and Asn-155. 175–176 (SD) is an ATP binding site. The PUA domain maps to 281-358 (AGELHVDDGA…AEIETILGYP (78 aa)).

It belongs to the glutamate 5-kinase family.

Its subcellular location is the cytoplasm. It carries out the reaction L-glutamate + ATP = L-glutamyl 5-phosphate + ADP. The protein operates within amino-acid biosynthesis; L-proline biosynthesis; L-glutamate 5-semialdehyde from L-glutamate: step 1/2. Catalyzes the transfer of a phosphate group to glutamate to form L-glutamate 5-phosphate. The chain is Glutamate 5-kinase from Rhizobium johnstonii (strain DSM 114642 / LMG 32736 / 3841) (Rhizobium leguminosarum bv. viciae).